A 205-amino-acid chain; its full sequence is Ras-like protein 3 (205 aa).

Residue 16–23 coordinates GTP; the sequence is GGGGVGKS. Residues 38–46 carry the Effector region motif; that stretch reads YDPTIEDSY. Residues 63-67 and 122-125 each bind GTP; these read DTAGQ and NKCD. Cysteine 202 bears the Cysteine methyl ester mark. The S-farnesyl cysteine moiety is linked to residue cysteine 202. Residues 203-205 constitute a propeptide, removed in mature form; that stretch reads ILM.

This sequence belongs to the small GTPase superfamily. Ras family.

It is found in the cell membrane. The catalysed reaction is GTP + H2O = GDP + phosphate + H(+). Alternates between an inactive form bound to GDP and an active form bound to GTP. Activated by a guanine nucleotide-exchange factor (GEF) and inactivated by a GTPase-activating protein (GAP). The chain is Ras-like protein 3 (RAS3) from Mucor circinelloides f. lusitanicus (Mucor racemosus var. lusitanicus).